Reading from the N-terminus, the 428-residue chain is Cytochrome c biogenesis protein CcsB (428 aa).

Transmembrane regions (helical) follow at residues 14–34 (LRFA…GTFI), 72–92 (SNWF…CSFR), and 162–182 (LGPI…AYGN).

The protein belongs to the Ccs1/CcsB family. As to quaternary structure, may interact with CcsA.

The protein localises to the cellular thylakoid membrane. Its function is as follows. Required during biogenesis of c-type cytochromes (cytochrome c6 and cytochrome f) at the step of heme attachment. The polypeptide is Cytochrome c biogenesis protein CcsB (Prochlorococcus marinus subsp. pastoris (strain CCMP1986 / NIES-2087 / MED4)).